Here is a 66-residue protein sequence, read N- to C-terminus: MPKQKTHRASAKRFKRTGSGGLKRFRAYTSHRFHGKTKKQRRHLRKAGMVHAGDFKRIKAMLTGLK.

Positions 1–16 (MPKQKTHRASAKRFKR) are enriched in basic residues. The segment at 1–21 (MPKQKTHRASAKRFKRTGSGG) is disordered.

Belongs to the bacterial ribosomal protein bL35 family.

This is Large ribosomal subunit protein bL35 from Streptococcus sanguinis (strain SK36).